A 292-amino-acid chain; its full sequence is Ribonuclease T2-like (292 aa).

An N-terminal signal peptide occupies residues 1–23 (MAKTASAMLFLYLLLSRCLLSHA). 5 disulfide bridges follow: Cys42-Cys61, Cys50-Cys103, Cys60-Cys177, Cys111-Cys169, and Cys246-Cys280. Residue Asn52 is glycosylated (N-linked (GlcNAc...) asparagine). Catalysis depends on residues His96, Glu162, and His166.

It belongs to the RNase T2 family.

The protein resides in the vacuole lumen. Its subcellular location is the cytoplasm. The catalysed reaction is a ribonucleotidyl-ribonucleotide-RNA + H2O = a 3'-end 3'-phospho-ribonucleotide-RNA + a 5'-end dephospho-ribonucleoside-RNA + H(+). Functionally, rnase which modulates cell survival under stress conditions. Released from the vacuole to the cytoplasm during stress to promote tRNA and rRNA cleavage and to activate separately a downstream pathway that promotes cell death. Involved in cell size, vacuolar morphology and growth at high temperatures and high salt concentration. This Eremothecium gossypii (strain ATCC 10895 / CBS 109.51 / FGSC 9923 / NRRL Y-1056) (Yeast) protein is Ribonuclease T2-like (RNY1).